A 369-amino-acid chain; its full sequence is 4-hydroxy-3-methylbut-2-en-1-yl diphosphate synthase (flavodoxin) (369 aa).

[4Fe-4S] cluster contacts are provided by Cys-270, Cys-273, Cys-305, and Glu-312.

This sequence belongs to the IspG family. The cofactor is [4Fe-4S] cluster.

The enzyme catalyses (2E)-4-hydroxy-3-methylbut-2-enyl diphosphate + oxidized [flavodoxin] + H2O + 2 H(+) = 2-C-methyl-D-erythritol 2,4-cyclic diphosphate + reduced [flavodoxin]. It participates in isoprenoid biosynthesis; isopentenyl diphosphate biosynthesis via DXP pathway; isopentenyl diphosphate from 1-deoxy-D-xylulose 5-phosphate: step 5/6. Converts 2C-methyl-D-erythritol 2,4-cyclodiphosphate (ME-2,4cPP) into 1-hydroxy-2-methyl-2-(E)-butenyl 4-diphosphate. In Pseudomonas putida (strain GB-1), this protein is 4-hydroxy-3-methylbut-2-en-1-yl diphosphate synthase (flavodoxin).